Consider the following 77-residue polypeptide: Conotoxin Vc6b (77 aa).

The first 22 residues, 1-22, serve as a signal peptide directing secretion; the sequence is MKLTCMMIVAVLFLTANTFVTA. Positions 23 to 47 are excised as a propeptide; it reads DDSGNGMENLFPKAGHEMENLEASN. 3 cysteine pairs are disulfide-bonded: Cys52-Cys66, Cys59-Cys72, and Cys67-Cys76.

As to expression, expressed by the venom duct.

It localises to the secreted. This Conus victoriae (Queen Victoria cone) protein is Conotoxin Vc6b.